A 123-amino-acid polypeptide reads, in one-letter code: uncharacterized protein (123 aa).

The Rhodanese domain occupies 17-117 (SNDNAFLVDV…NNQDKGWKQN (101 aa)).

This is an uncharacterized protein from Rickettsia rickettsii.